The chain runs to 448 residues: MKSYEVNFDGLVGPTHNYGGLSYGNVASQSNSQQSSNPKEAALQGLQKMKALMDMGFVQGVLAPQERPDVAALRNLGFSGTDAQVIQQAAKHAMPLLVASCSASSMWVANAATVSPSADTADGRVHFTAANLNCKYHRSIEHPTTSRVLGAMFADQKHFAHHAALPAVAQFGDEGAANHTRFCRDYGEAGVEFFVYGRSAFDTRYPAPQKYPARQTLEASQAVARLHGLQDDGVVYAQQNPAVIDAGVFHNDVIAVGNGEVLFYHEDAFLNTEQMLGELHGKLGKLGGHFQSVCVPRAQVSVEDAVRSYLFNSQLLSRADGSMLLIVPEECRANERVWQYLQGLTASGGLIREVKVFDLKQSMQNGGGPACLRLRVALNETELAAVNPGVIMTAPLYDTLTQWVDKHYRDSLRETDLADPQLLLECRTALDELTQILKLGSVYPFQIN.

Residues 19 to 28 (GGLSYGNVAS), Asn110, and 137 to 138 (HR) contribute to the substrate site. Residue Glu174 is part of the active site. Arg214 serves as a coordination point for substrate. His250 is an active-site residue. Substrate contacts are provided by Asp252 and Asn365. The Nucleophile role is filled by Cys371.

Belongs to the succinylarginine dihydrolase family. Homodimer.

The catalysed reaction is N(2)-succinyl-L-arginine + 2 H2O + 2 H(+) = N(2)-succinyl-L-ornithine + 2 NH4(+) + CO2. Its pathway is amino-acid degradation; L-arginine degradation via AST pathway; L-glutamate and succinate from L-arginine: step 2/5. Its function is as follows. Catalyzes the hydrolysis of N(2)-succinylarginine into N(2)-succinylornithine, ammonia and CO(2). This Pseudomonas fluorescens (strain SBW25) protein is N-succinylarginine dihydrolase.